The chain runs to 428 residues: Histone deacetylase 3 (428 aa).

The interval 3–316 is histone deacetylase; the sequence is KTVAYFYDPD…WTYETSLLVE (314 aa). The 1D-myo-inositol 1,4,5,6-tetrakisphosphate site is built by H17, G21, and K25. H135 is a catalytic residue. Positions 170, 172, and 259 each coordinate Zn(2+). Residue R265 participates in 1D-myo-inositol 1,4,5,6-tetrakisphosphate binding. Composition is skewed to basic and acidic residues over residues 388–405 and 415–428; these read DRTD…ENYS and DGDH…DVEI. The disordered stretch occupies residues 388 to 428; the sequence is DRTDEADAEERGPEENYSRPEAPNEFYDGDHDNDKESDVEI. S424 bears the Phosphoserine mark.

This sequence belongs to the histone deacetylase family. HD type 1 subfamily. As to quaternary structure, interacts with HDAC7 and HDAC9. Interacts with DAXX, KDM4A, HDAC10 and DACH1. Found in a complex with NCOR1 and NCOR2. Component of the N-Cor repressor complex, at least composed of NCOR1, NCOR2, HDAC3, TBL1X, TBL1R, CORO2A and GPS2. Interacts with BCOR, MJD2A/JHDM3A, NRIP1, PRDM6 and SRY. Interacts with BTBD14B. Interacts with GLIS2. Interacts (via the DNA-binding domain) with NR2C1; the interaction recruits phosphorylated NR2C1 to PML bodies for sumoylation. Component of the Notch corepressor complex. Interacts with CBFA2T3 and NKAP. Interacts with APEX1; the interaction is not dependent on the acetylated status of APEX1. Interacts with ZMYND15. Interacts with SMRT/NCOR2 and BCL6 on DNA enhancer elements. Interacts with INSM1. Interacts with XBP1 isoform 1; the interaction occurs in endothelial cell (EC) under disturbed flow. Interacts (via C-terminus) with CCAR2 (via N-terminus). Interacts with and deacetylates MEF2D. Interacts with BEND3. Interacts with NKAPL. Interacts with DHX36; this interaction occurs in a RNA-dependent manner. Interacts weakly with CRY1; this interaction is enhanced in the presence of FBXL3. Interacts with FBXL3 and BMAL1. Interacts with NCOR1. Interacts with RARA. Interacts with SETD5. (Microbial infection) Interacts with human cytomegalovirus (HHV-5) immediate early protein IE1; this interaction decreases histone acetylation and allows transcriptional activation by the virus. The cofactor is Zn(2+). Sumoylated in vitro. In terms of processing, deubiquitinated on 'Lys-63'-linked ubiquitin chains by USP38; leading to a decreased level of histone acetylation. In terms of tissue distribution, widely expressed.

It localises to the nucleus. Its subcellular location is the chromosome. It is found in the cytoplasm. The protein localises to the cytosol. It carries out the reaction N(6)-acetyl-L-lysyl-[histone] + H2O = L-lysyl-[histone] + acetate. The enzyme catalyses N(6)-acetyl-L-lysyl-[protein] + H2O = L-lysyl-[protein] + acetate. It catalyses the reaction N(6)-(2E)-butenoyl-L-lysyl-[protein] + H2O = (2E)-2-butenoate + L-lysyl-[protein]. The catalysed reaction is N(6)-(2-hydroxyisobutanoyl)-L-lysyl-[protein] + H2O = 2-hydroxy-2-methylpropanoate + L-lysyl-[protein]. It carries out the reaction N(6)-[(S)-lactoyl]-L-lysyl-[protein] + H2O = (S)-lactate + L-lysyl-[protein]. With respect to regulation, inositol tetraphosphate (1D-myo-inositol 1,4,5,6-tetrakisphosphate) promotes the histone deacetylase activity by acting as an intermolecular glue between HDAC3 and NCOR2, thereby promoting its association with the N-Cor complex, a prerequisite for the histone deacetylase activity. Histone deacetylase that catalyzes the deacetylation of lysine residues on the N-terminal part of the core histones (H2A, H2B, H3 and H4), and some other non-histone substrates. Histone deacetylation gives a tag for epigenetic repression and plays an important role in transcriptional regulation, cell cycle progression and developmental events. Histone deacetylases act via the formation of large multiprotein complexes, such as N-Cor repressor complex, which activate the histone deacetylase activity. Participates in the BCL6 transcriptional repressor activity by deacetylating the H3 'Lys-27' (H3K27) on enhancer elements, antagonizing EP300 acetyltransferase activity and repressing proximal gene expression. Acts as a molecular chaperone for shuttling phosphorylated NR2C1 to PML bodies for sumoylation. Contributes, together with XBP1 isoform 1, to the activation of NFE2L2-mediated HMOX1 transcription factor gene expression in a PI(3)K/mTORC2/Akt-dependent signaling pathway leading to endothelial cell (EC) survival under disturbed flow/oxidative stress. Regulates both the transcriptional activation and repression phases of the circadian clock in a deacetylase activity-independent manner. During the activation phase, promotes the accumulation of ubiquitinated BMAL1 at the E-boxes and during the repression phase, blocks FBXL3-mediated CRY1/2 ubiquitination and promotes the interaction of CRY1 and BMAL1. The NCOR1-HDAC3 complex regulates the circadian expression of the core clock gene BMAL1 and the genes involved in lipid metabolism in the liver. Also functions as a deacetylase for non-histone targets, such as KAT5, MEF2D, MAPK14, RARA and STAT3. Serves as a corepressor of RARA, mediating its deacetylation and repression, leading to inhibition of RARE DNA element binding. In association with RARA, plays a role in the repression of microRNA-10a and thereby in the inflammatory response. In addition to protein deacetylase activity, also acts as a protein-lysine deacylase by recognizing other acyl groups: catalyzes removal of (2E)-butenoyl (crotonyl), lactoyl (lactyl) and 2-hydroxyisobutanoyl (2-hydroxyisobutyryl) acyl groups from lysine residues, leading to protein decrotonylation, delactylation and de-2-hydroxyisobutyrylation, respectively. Catalyzes decrotonylation of MAPRE1/EB1. Mediates delactylation NBN/NBS1, thereby inhibiting DNA double-strand breaks (DSBs) via homologous recombination (HR). This is Histone deacetylase 3 (HDAC3) from Homo sapiens (Human).